Consider the following 349-residue polypeptide: Small ribosomal subunit biogenesis GTPase RsgA 2 (349 aa).

Residues 97–252 enclose the CP-type G domain; sequence AEQLIATNVD…IIDTPGMREL (156 aa). GTP-binding positions include 142 to 145 and 194 to 202; these read TKAD and GSSGVGKST. Zn(2+)-binding residues include Cys275, Cys280, His282, and Cys288.

This sequence belongs to the TRAFAC class YlqF/YawG GTPase family. RsgA subfamily. As to quaternary structure, monomer. Associates with 30S ribosomal subunit, binds 16S rRNA. Requires Zn(2+) as cofactor.

It localises to the cytoplasm. Functionally, one of several proteins that assist in the late maturation steps of the functional core of the 30S ribosomal subunit. Helps release RbfA from mature subunits. May play a role in the assembly of ribosomal proteins into the subunit. Circularly permuted GTPase that catalyzes slow GTP hydrolysis, GTPase activity is stimulated by the 30S ribosomal subunit. In Vibrio vulnificus (strain CMCP6), this protein is Small ribosomal subunit biogenesis GTPase RsgA 2.